A 434-amino-acid polypeptide reads, in one-letter code: Nicotinate phosphoribosyltransferase (434 aa).

At histidine 242 the chain carries Phosphohistidine; by autocatalysis.

This sequence belongs to the NAPRTase family. Post-translationally, transiently phosphorylated on a His residue during the reaction cycle. Phosphorylation strongly increases the affinity for substrates and increases the rate of nicotinate D-ribonucleotide production. Dephosphorylation regenerates the low-affinity form of the enzyme, leading to product release.

The enzyme catalyses nicotinate + 5-phospho-alpha-D-ribose 1-diphosphate + ATP + H2O = nicotinate beta-D-ribonucleotide + ADP + phosphate + diphosphate. Its pathway is cofactor biosynthesis; NAD(+) biosynthesis; nicotinate D-ribonucleotide from nicotinate: step 1/1. Catalyzes the synthesis of beta-nicotinate D-ribonucleotide from nicotinate and 5-phospho-D-ribose 1-phosphate at the expense of ATP. The protein is Nicotinate phosphoribosyltransferase of Bartonella quintana (strain Toulouse) (Rochalimaea quintana).